The sequence spans 467 residues: Ran-binding protein M homolog (467 aa).

Positions 1-25 (MNSSPPPANSANGDTTNNGENGQDL) are disordered. Polar residues predominate over residues 9-25 (NSANGDTTNNGENGQDL). The B30.2/SPRY domain occupies 31–219 (DKIRLSAKRD…VLVNFGKKKF (189 aa)). Residues 244-276 (PPNIGYGLVKTYLLHYGYEETLDAFNLATKNTV) form the LisH domain. In terms of domain architecture, CTLH spans 295-353 (ALKQRKNLRQLVRNGEIDTALAELQKLYPQIVQDDKSVVCFLLHCQKFIELVRVGKLEE).

This sequence belongs to the RANBP9/10 family. As to quaternary structure, interacts with WDR36, WDS, GID8, MAEA and RMD5.

The protein resides in the cytoplasm. It localises to the nucleus. The protein localises to the perinuclear region. The protein is Ran-binding protein M homolog of Arabidopsis thaliana (Mouse-ear cress).